A 127-amino-acid polypeptide reads, in one-letter code: Phosphoribosyl-ATP pyrophosphatase (127 aa).

This sequence belongs to the PRA-PH family.

It localises to the cytoplasm. The enzyme catalyses 1-(5-phospho-beta-D-ribosyl)-ATP + H2O = 1-(5-phospho-beta-D-ribosyl)-5'-AMP + diphosphate + H(+). It functions in the pathway amino-acid biosynthesis; L-histidine biosynthesis; L-histidine from 5-phospho-alpha-D-ribose 1-diphosphate: step 2/9. The protein is Phosphoribosyl-ATP pyrophosphatase of Polaromonas sp. (strain JS666 / ATCC BAA-500).